Here is a 63-residue protein sequence, read N- to C-terminus: Small ribosomal subunit protein eS17 (63 aa).

The protein belongs to the eukaryotic ribosomal protein eS17 family.

The chain is Small ribosomal subunit protein eS17 from Methanosphaerula palustris (strain ATCC BAA-1556 / DSM 19958 / E1-9c).